The chain runs to 110 residues: NADH-quinone oxidoreductase subunit K (110 aa).

3 helical membrane-spanning segments follow: residues 13 to 33 (LNHY…GLFM), 41 to 61 (ILMS…AFSI), and 73 to 93 (IIIL…LLIY).

The protein belongs to the complex I subunit 4L family. As to quaternary structure, NDH-1 is composed of 14 different subunits. Subunits NuoA, H, J, K, L, M, N constitute the membrane sector of the complex.

Its subcellular location is the cell inner membrane. The enzyme catalyses a quinone + NADH + 5 H(+)(in) = a quinol + NAD(+) + 4 H(+)(out). NDH-1 shuttles electrons from NADH, via FMN and iron-sulfur (Fe-S) centers, to quinones in the respiratory chain. The immediate electron acceptor for the enzyme in this species is believed to be ubiquinone. Couples the redox reaction to proton translocation (for every two electrons transferred, four hydrogen ions are translocated across the cytoplasmic membrane), and thus conserves the redox energy in a proton gradient. The chain is NADH-quinone oxidoreductase subunit K from Rickettsia felis (strain ATCC VR-1525 / URRWXCal2) (Rickettsia azadi).